Here is a 152-residue protein sequence, read N- to C-terminus: Ribosome maturation factor RimP (152 aa).

It belongs to the RimP family.

It localises to the cytoplasm. Required for maturation of 30S ribosomal subunits. In Francisella tularensis subsp. tularensis (strain FSC 198), this protein is Ribosome maturation factor RimP.